The sequence spans 418 residues: Inward rectifier potassium channel 16 (418 aa).

At 1-67 the chain is on the cytoplasmic side; sequence MSYYGSSYHI…VVDIFTTLVD (67 aa). Residues 68 to 94 traverse the membrane as a helical segment; the sequence is TKWRHMFVIFSLSYILSWLIFGSVFWL. Residues 95 to 117 are Extracellular-facing; that stretch reads IAFHHGDLLNDPDITPCVDNVHS. The helical; Pore-forming intramembrane region spans 118 to 134; the sequence is FTGAFLFSLETQTTIGY. A Selectivity filter motif is present at residues 131–136; it reads TIGYGY. Residues 135 to 143 are Extracellular-facing; sequence GYRCVTEEC. The helical transmembrane segment at 144–171 threads the bilayer; the sequence is SVAVLMVILQSILSCIINTFIIGAALAK. Residues 172–418 lie on the Cytoplasmic side of the membrane; that stretch reads MATARKRAQT…LNRISVESQM (247 aa). A phosphoserine mark is found at Ser-373 and Ser-375.

It belongs to the inward rectifier-type potassium channel (TC 1.A.2.1) family. KCNJ16 subfamily. It forms heteromeric channels with Kir4.1/KCNJ10; this interaction is required for KCNJ16 localization to the basolateral membrane in kidney cells. As a heteromer with KCNJ10, may interact with MAGI1; this interaction may facilitate KCNJ10/KCNJ16 potassium channel expression at the basolateral membrane in kidney cells. May form heteromers with Kir2.1/KCNJ2. Can form heteromeric channels with Kir4.2/KCNJ15. As to expression, widely expressed, with highest levels in adult and fetal kidney (at protein level). In the kidney, expressed in the proximal and distal convoluted tubules, but not in glomeruli nor collecting ducts.

The protein resides in the membrane. It is found in the basolateral cell membrane. The enzyme catalyses K(+)(in) = K(+)(out). With respect to regulation, channel activity is strongly regulated by variations of cytosolic pH; channels are activated by alkaline and inhibited by acidic pH values. Activated by phosphatidylinositol 4,5 biphosphate (PtdIns(4,5)P2). Functionally, inward rectifier potassium channels are characterized by a greater tendency to allow potassium to flow into the cell rather than out of it. Their voltage dependence is regulated by the concentration of extracellular potassium; as external potassium is raised, the voltage range of the channel opening shifts to more positive voltages. The inward rectification is mainly due to the blockage of outward current by internal magnesium. KCNJ16 may be involved in the regulation of fluid and pH balance. In the kidney, together with KCNJ10, mediates basolateral K(+) recycling in distal tubules; this process is critical for Na(+) reabsorption at the tubules. This chain is Inward rectifier potassium channel 16 (KCNJ16), found in Homo sapiens (Human).